Consider the following 516-residue polypeptide: Chromosomal replication initiator protein DnaA (516 aa).

Residues 1–72 (MSLEHWNLCL…LLSEFAGDDL (72 aa)) are domain I, interacts with DnaA modulators. A domain II region spans residues 72-179 (LAPALKLAVK…QVEGGINHGA (108 aa)). Residues 180–396 (NLNNSFTFDN…GALKRVIANS (217 aa)) are domain III, AAA+ region. ATP is bound by residues Gly-224, Gly-226, Lys-227, and Thr-228. The tract at residues 397-516 (HFTGRAITPD…YKQLMRILTT (120 aa)) is domain IV, binds dsDNA.

This sequence belongs to the DnaA family. Oligomerizes as a right-handed, spiral filament on DNA at oriC.

The protein localises to the cytoplasm. Functionally, plays an essential role in the initiation and regulation of chromosomal replication. ATP-DnaA binds to the origin of replication (oriC) to initiate formation of the DNA replication initiation complex once per cell cycle. Binds the DnaA box (a 9 base pair repeat at the origin) and separates the double-stranded (ds)DNA. Forms a right-handed helical filament on oriC DNA; dsDNA binds to the exterior of the filament while single-stranded (ss)DNA is stabiized in the filament's interior. The ATP-DnaA-oriC complex binds and stabilizes one strand of the AT-rich DNA unwinding element (DUE), permitting loading of DNA polymerase. After initiation quickly degrades to an ADP-DnaA complex that is not apt for DNA replication. Binds acidic phospholipids. The polypeptide is Chromosomal replication initiator protein DnaA (Marinomonas sp. (strain MWYL1)).